The sequence spans 561 residues: Urocanate hydratase (561 aa).

Residues 52–53 (GG), Q130, 176–178 (GMG), E196, R201, 242–243 (NA), 263–267 (QTSAH), 273–274 (YL), and Y322 each bind NAD(+). Residue C410 is part of the active site. Residue G492 coordinates NAD(+).

It belongs to the urocanase family. NAD(+) is required as a cofactor.

Its subcellular location is the cytoplasm. The catalysed reaction is 4-imidazolone-5-propanoate = trans-urocanate + H2O. The protein operates within amino-acid degradation; L-histidine degradation into L-glutamate; N-formimidoyl-L-glutamate from L-histidine: step 2/3. Its function is as follows. Catalyzes the conversion of urocanate to 4-imidazolone-5-propionate. This Salmonella arizonae (strain ATCC BAA-731 / CDC346-86 / RSK2980) protein is Urocanate hydratase.